The primary structure comprises 340 residues: MALIHEILGKLSLEGNQSCARQSALGTVKASTNFDAEKDAAAIETAIKTKGVDELTIINILTNRSNDQRQDIAFAYHRRTKKDLASALKGALSGNLETVMLGLIKTRPQYDASELKASMKGLGTDEDTLIEIICSRTNKELLDIQNAYRELYKTELEKDIVSDTSGDFRKLMVALAKGKRQEEGSVVDYEKIDQDARELYEAGVKRKGTDVGKWITIMTERSTPHLQKVFERYKSYSPYDMEESIKKEVKGDLENAFLNLVQCIQNKPLYFADRLYESMKGRGTKDKILIRTMVSRSELDMLKIRKEFKKKYGKSLHYFIGQDTKGDYQRALFNLCGGDD.

Residues Ala-2–Leu-25 are P10 binding site. Annexin repeat units lie at residues Phe-34 to Lys-105, Thr-106 to Lys-177, Glu-190 to Gln-262, and Asn-266 to Gly-337.

Belongs to the annexin family. As to quaternary structure, tetramer of 2 light chains (p10 proteins) and 2 heavy chains (p36 proteins).

It is found in the secreted. It localises to the extracellular space. The protein resides in the extracellular matrix. Its subcellular location is the basement membrane. Calcium-regulated membrane-binding protein whose affinity for calcium is greatly enhanced by anionic phospholipids. It binds two calcium ions with high affinity. This chain is Annexin A2-A (anxa2-a), found in Xenopus laevis (African clawed frog).